The chain runs to 208 residues: Coiled-coil domain-containing protein 25 (208 aa).

Over 1–105 the chain is Extracellular; it reads MVFYFTSSSV…SNLKKTADMD (105 aa). A DNA-binding region spans residues 21 to 25; that stretch reads KDKYE. K23 carries the post-translational modification N6-acetyllysine. The chain crosses the membrane as a helical span at residues 106–122; the sequence is VGQIGFHRQKDVKIVTV. Positions 117 to 187 form a coiled coil; sequence VKIVTVEKKV…REMDELRSYS (71 aa). Residues 123 to 208 are Cytoplasmic-facing; the sequence is EKKVNEILNR…QDGNDSDEFM (86 aa). The span at 144-184 shows a compositional bias: basic and acidic residues; sequence LAAEKEGRDREERNEKKAQIQEMKRKEKEEMKKKREMDELR. A disordered region spans residues 144–208; the sequence is LAAEKEGRDR…QDGNDSDEFM (65 aa). At S204 the chain carries Phosphoserine.

This sequence belongs to the CCDC25 family. As to quaternary structure, interacts (via cytoplasmic region) with ILK.

Its subcellular location is the cell membrane. It localises to the endomembrane system. Its function is as follows. Transmembrane receptor that senses neutrophil extracellular traps (NETs) and triggers the ILK-PARVB pathway to enhance cell motility. NETs are mainly composed of DNA fibers and are released by neutrophils to bind pathogens during inflammation. Formation of NETs is also associated with cancer metastasis, NET-DNA acting as a chemotactic factor to attract cancer cells. Specifically binds NETs on its extracellular region, in particular the 8-OHdG-enriched DNA present in NETs, and recruits ILK, initiating the ILK-PARVB cascade to induce cytoskeleton rearrangement and directional migration of cells. In the context of cancer, promotes cancer metastasis by sensing NETs and promoting migration of tumor cells. The chain is Coiled-coil domain-containing protein 25 from Mus musculus (Mouse).